The primary structure comprises 462 residues: Dipeptidyl peptidase 1 (462 aa).

A signal peptide spans 1-24 (MGPWTHSLRAVLLLVLLGVCTVRS). N-linked (GlcNAc...) asparagine glycans are attached at residues asparagine 29 and asparagine 53. 5 cysteine pairs are disulfide-bonded: cysteine 30/cysteine 118, cysteine 54/cysteine 136, cysteine 254/cysteine 297, cysteine 290/cysteine 330, and cysteine 320/cysteine 336. A propeptide spanning residues 135-230 (ACFVGKKVES…DEIQQQILNL (96 aa)) is cleaved from the precursor. The active site involves cysteine 257. Asparagine 275 carries an N-linked (GlcNAc...) asparagine glycan. Chloride-binding residues include phenylalanine 301 and tyrosine 303. Residue tyrosine 346 participates in chloride binding. Active-site residues include histidine 404 and asparagine 426.

The protein belongs to the peptidase C1 family. In terms of assembly, tetramer of heterotrimers consisting of exclusion domain, heavy- and light chains. Chloride is required as a cofactor. In terms of tissue distribution, broadly distributed, but higher levels found in lung, liver, kidney and spleen. Lower levels found in testis and brain.

It is found in the lysosome. It catalyses the reaction Release of an N-terminal dipeptide, Xaa-Yaa-|-Zaa-, except when Xaa is Arg or Lys, or Yaa or Zaa is Pro.. Thiol protease. Has dipeptidylpeptidase activity. Active against a broad range of dipeptide substrates composed of both polar and hydrophobic amino acids. Proline cannot occupy the P1 position and arginine cannot occupy the P2 position of the substrate. Can act as both an exopeptidase and endopeptidase. Activates serine proteases such as elastase, cathepsin G and granzymes A and B. The protein is Dipeptidyl peptidase 1 (Ctsc) of Mus musculus (Mouse).